The sequence spans 303 residues: AP2-like ethylene-responsive transcription factor At1g79700 (303 aa).

Positions 1–10 (MAKVSGRSKK) are enriched in basic residues. The interval 1–55 (MAKVSGRSKKTIVDDEISDKTASASESASIALTSKRKRKSPPRNAPLQRSSPYRG) is disordered. The span at 20–32 (KTASASESASIAL) shows a compositional bias: polar residues. 2 consecutive DNA-binding regions (AP2/ERF) follow at residues 52 to 118 (PYRG…LNFP) and 154 to 202 (KYRG…TNFD). The disordered stretch occupies residues 212 to 259 (AADKADSDSKPIRSPSREPESSDDNKSPKSEEVIEPSTSPEVIPTRRS). Positions 214-243 (DKADSDSKPIRSPSREPESSDDNKSPKSEE) are enriched in basic and acidic residues.

This sequence belongs to the AP2/ERF transcription factor family. AP2 subfamily.

The protein localises to the nucleus. Its function is as follows. Probably acts as a transcriptional activator. Binds to the GCC-box pathogenesis-related promoter element. May be involved in the regulation of gene expression by stress factors and by components of stress signal transduction pathways. This is AP2-like ethylene-responsive transcription factor At1g79700 from Arabidopsis thaliana (Mouse-ear cress).